A 154-amino-acid chain; its full sequence is Transcriptional repressor NrdR (154 aa).

A zinc finger spans residues 3 to 34 (CPYCQSEDTQVKDSRPAEDGAAIRRRRACPVC). The region spanning 49–139 (LVVVKRTGRK…VYRNFREAKD (91 aa)) is the ATP-cone domain.

The protein belongs to the NrdR family. Zn(2+) is required as a cofactor.

Functionally, negatively regulates transcription of bacterial ribonucleotide reductase nrd genes and operons by binding to NrdR-boxes. The protein is Transcriptional repressor NrdR of Chelativorans sp. (strain BNC1).